Here is a 329-residue protein sequence, read N- to C-terminus: Putative oligopeptide transport ATP-binding protein YkfD (329 aa).

Residues 7-252 (LEVSQLKMHF…PLHPYTKALL (246 aa)) enclose the ABC transporter domain. Residue 44–51 (GESGCGKS) coordinates ATP.

This sequence belongs to the ABC transporter superfamily.

The sequence is that of Putative oligopeptide transport ATP-binding protein YkfD (ykfD) from Bacillus subtilis (strain 168).